A 276-amino-acid polypeptide reads, in one-letter code: Ribosomal RNA small subunit methyltransferase A (276 aa).

S-adenosyl-L-methionine contacts are provided by asparagine 27, leucine 29, glycine 54, glutamate 75, aspartate 101, and asparagine 122.

The protein belongs to the class I-like SAM-binding methyltransferase superfamily. rRNA adenine N(6)-methyltransferase family. RsmA subfamily.

The protein resides in the cytoplasm. It carries out the reaction adenosine(1518)/adenosine(1519) in 16S rRNA + 4 S-adenosyl-L-methionine = N(6)-dimethyladenosine(1518)/N(6)-dimethyladenosine(1519) in 16S rRNA + 4 S-adenosyl-L-homocysteine + 4 H(+). In terms of biological role, specifically dimethylates two adjacent adenosines (A1518 and A1519) in the loop of a conserved hairpin near the 3'-end of 16S rRNA in the 30S particle. May play a critical role in biogenesis of 30S subunits. The sequence is that of Ribosomal RNA small subunit methyltransferase A from Brucella melitensis biotype 1 (strain ATCC 23456 / CCUG 17765 / NCTC 10094 / 16M).